A 360-amino-acid polypeptide reads, in one-letter code: MDTMIDIKGLSIDELERFLLGKGKERYRARQIFKWLYQRGATSFAEMTDLAKELRRDLEETARISTLSPEALEISRDGTRKYLFRLDDGCSVESVLIPEEDRNTLCISSQVGCAMACEFCLTGTFRLTRNLTTAEIVNQVCAVQRDVPVRNIVFMGMGEPLANLDNVIRALQIMLHDDGLQFSTRRITVSTAGLVPEMERLGRSVTVNLAVSLNATTDELRDRIMPINRKYPLAVLLDACRRFPLPGRRKITIEYVLLGGVNDTLDDAKRLVRLLSDIPSKINLIPFNEHEGCSFRSPSQDAIDRFHRYLLDKHFTVITRSSRGADISAACGQLKGKLDALKPSGAGKQIEVSDSTNEVT.

The active-site Proton acceptor is glutamate 93. The Radical SAM core domain occupies 99 to 326 (EEDRNTLCIS…VITRSSRGAD (228 aa)). Cysteines 106 and 331 form a disulfide. The [4Fe-4S] cluster site is built by cysteine 113, cysteine 117, and cysteine 120. S-adenosyl-L-methionine-binding positions include 158-159 (GE), serine 190, 212-214 (SLN), and asparagine 288. The active-site S-methylcysteine intermediate is the cysteine 331.

It belongs to the radical SAM superfamily. RlmN family. It depends on [4Fe-4S] cluster as a cofactor.

The protein localises to the cytoplasm. The enzyme catalyses adenosine(2503) in 23S rRNA + 2 reduced [2Fe-2S]-[ferredoxin] + 2 S-adenosyl-L-methionine = 2-methyladenosine(2503) in 23S rRNA + 5'-deoxyadenosine + L-methionine + 2 oxidized [2Fe-2S]-[ferredoxin] + S-adenosyl-L-homocysteine. It carries out the reaction adenosine(37) in tRNA + 2 reduced [2Fe-2S]-[ferredoxin] + 2 S-adenosyl-L-methionine = 2-methyladenosine(37) in tRNA + 5'-deoxyadenosine + L-methionine + 2 oxidized [2Fe-2S]-[ferredoxin] + S-adenosyl-L-homocysteine. Specifically methylates position 2 of adenine 2503 in 23S rRNA and position 2 of adenine 37 in tRNAs. m2A2503 modification seems to play a crucial role in the proofreading step occurring at the peptidyl transferase center and thus would serve to optimize ribosomal fidelity. The protein is Dual-specificity RNA methyltransferase RlmN of Geobacter sulfurreducens (strain ATCC 51573 / DSM 12127 / PCA).